Here is an 83-residue protein sequence, read N- to C-terminus: ATP synthase subunit c (83 aa).

The next 2 membrane-spanning stretches (helical) occupy residues 10–30 (IAVA…FGLL) and 52–72 (MFIV…IALF).

It belongs to the ATPase C chain family. F-type ATPases have 2 components, F(1) - the catalytic core - and F(0) - the membrane proton channel. F(1) has five subunits: alpha(3), beta(3), gamma(1), delta(1), epsilon(1). F(0) has three main subunits: a(1), b(2) and c(10-14). The alpha and beta chains form an alternating ring which encloses part of the gamma chain. F(1) is attached to F(0) by a central stalk formed by the gamma and epsilon chains, while a peripheral stalk is formed by the delta and b chains.

It is found in the cell inner membrane. Functionally, f(1)F(0) ATP synthase produces ATP from ADP in the presence of a proton or sodium gradient. F-type ATPases consist of two structural domains, F(1) containing the extramembraneous catalytic core and F(0) containing the membrane proton channel, linked together by a central stalk and a peripheral stalk. During catalysis, ATP synthesis in the catalytic domain of F(1) is coupled via a rotary mechanism of the central stalk subunits to proton translocation. In terms of biological role, key component of the F(0) channel; it plays a direct role in translocation across the membrane. A homomeric c-ring of between 10-14 subunits forms the central stalk rotor element with the F(1) delta and epsilon subunits. In Shewanella loihica (strain ATCC BAA-1088 / PV-4), this protein is ATP synthase subunit c.